The following is a 554-amino-acid chain: (Z)-gamma-bisabolene synthase 1 (554 aa).

Positions 306, 310, 450, and 458 each coordinate Mg(2+). The DDXXD motif signature appears at 306-310 (DDACD).

It belongs to the terpene synthase family. Tpsa subfamily. Requires Mg(2+) as cofactor. Mn(2+) is required as a cofactor. In terms of tissue distribution, predominantly expressed in roots. Expressed in the cortex and the sub-epidermal layers of roots. Also detected in leaf hydathodes and flower stigmata.

Its subcellular location is the cytoplasm. The catalysed reaction is (2E,6E)-farnesyl diphosphate = (Z)-gamma-bisabolene + diphosphate. It participates in secondary metabolite biosynthesis; terpenoid biosynthesis. Its function is as follows. Involved in sesquiterpene (C15) biosynthesis. The major product is (Z)-gamma-bisabolene with minor amounts of (E)-nerolidol and alpha-bisabolol. The polypeptide is (Z)-gamma-bisabolene synthase 1 (TPS12) (Arabidopsis thaliana (Mouse-ear cress)).